The primary structure comprises 258 residues: Indole-3-glycerol phosphate synthase (258 aa).

The protein belongs to the TrpC family.

The catalysed reaction is 1-(2-carboxyphenylamino)-1-deoxy-D-ribulose 5-phosphate + H(+) = (1S,2R)-1-C-(indol-3-yl)glycerol 3-phosphate + CO2 + H2O. Its pathway is amino-acid biosynthesis; L-tryptophan biosynthesis; L-tryptophan from chorismate: step 4/5. In Campylobacter fetus subsp. fetus (strain 82-40), this protein is Indole-3-glycerol phosphate synthase.